The primary structure comprises 119 residues: Ribosome-binding factor A (119 aa).

This sequence belongs to the RbfA family. In terms of assembly, monomer. Binds 30S ribosomal subunits, but not 50S ribosomal subunits or 70S ribosomes.

The protein localises to the cytoplasm. Its function is as follows. One of several proteins that assist in the late maturation steps of the functional core of the 30S ribosomal subunit. Associates with free 30S ribosomal subunits (but not with 30S subunits that are part of 70S ribosomes or polysomes). Required for efficient processing of 16S rRNA. May interact with the 5'-terminal helix region of 16S rRNA. This is Ribosome-binding factor A from Mycoplasmoides gallisepticum (strain R(low / passage 15 / clone 2)) (Mycoplasma gallisepticum).